A 30-amino-acid chain; its full sequence is Antifungal protein Lap (30 aa).

Its function is as follows. Displays antifungal activity against M.arachidicola and P.piricola, but not against R.solani, C.gossypii and C.comatus. Inhibits mycelial growth in P.piricola with an IC(50) of 70 nM. Displays very low cell-free translation inhibitory activity in a rabbit reticulocyte lysate system (IC(50)=70 uM) but is able to inhibit HIV-1 reverse transcriptase activity (IC(50)=5.2 nM). This is Antifungal protein Lap from Lyophyllum shimeji (Hon-shimeji).